We begin with the raw amino-acid sequence, 211 residues long: Cytochrome c biogenesis ATP-binding export protein CcmA (211 aa).

Positions 6-211 (LQTVALACER…RDIDLGNWAV (206 aa)) constitute an ABC transporter domain. 38–45 (GPNGSGKT) provides a ligand contact to ATP.

The protein belongs to the ABC transporter superfamily. CcmA exporter (TC 3.A.1.107) family. As to quaternary structure, the complex is composed of two ATP-binding proteins (CcmA) and two transmembrane proteins (CcmB).

The protein localises to the cell inner membrane. The catalysed reaction is heme b(in) + ATP + H2O = heme b(out) + ADP + phosphate + H(+). In terms of biological role, part of the ABC transporter complex CcmAB involved in the biogenesis of c-type cytochromes; once thought to export heme, this seems not to be the case, but its exact role is uncertain. Responsible for energy coupling to the transport system. The protein is Cytochrome c biogenesis ATP-binding export protein CcmA of Pseudomonas fluorescens (strain Pf0-1).